The following is a 129-amino-acid chain: Glycine cleavage system H protein (129 aa).

Residues 24–106 (LVRVGLSAYA…HGEGWLLVIR (83 aa)) enclose the Lipoyl-binding domain. The residue at position 65 (lysine 65) is an N6-lipoyllysine.

Belongs to the GcvH family. As to quaternary structure, the glycine cleavage system is composed of four proteins: P, T, L and H. It depends on (R)-lipoate as a cofactor.

The glycine cleavage system catalyzes the degradation of glycine. The H protein shuttles the methylamine group of glycine from the P protein to the T protein. This Synechococcus sp. (strain CC9311) protein is Glycine cleavage system H protein.